The primary structure comprises 471 residues: Putative metabolite transport protein YncC (471 aa).

12 consecutive transmembrane segments (helical) span residues 13–33, 50–70, 88–108, 111–131, 146–166, 175–195, 256–276, 295–315, 323–343, 358–378, 393–413, and 416–436; these read LIMISATFGGLLFGYDTGVIN, VTEGLVTSILLLGAAFGALLC, FLFFLASLGTALAPNVFIMAV, FLLGLAVGGASAMVPAFLAEM, LMIVGGQFLAYVFNAILGVTM, YMLVICAVPAIMLFASMLKVP, LLWIGIGVAIVNQITGVNSIM, IANIGNGLISVIAVIFGIWLV, ILLIGLAGTTTALLLIAIFSI, LTVLFLAFMQGCVGPVTWLVI, ISVFFLWILNFVIGFAFPILL, and VGLSFTFFIFVALGVLAIGFV.

The protein belongs to the major facilitator superfamily. Sugar transporter (TC 2.A.1.1) family.

Its subcellular location is the cell membrane. This Bacillus subtilis (strain 168) protein is Putative metabolite transport protein YncC (yncC).